The following is a 101-amino-acid chain: Chaperone modulatory protein CbpM (101 aa).

Belongs to the CbpM family.

Its function is as follows. Interacts with CbpA and inhibits both the DnaJ-like co-chaperone activity and the DNA binding activity of CbpA. Together with CbpA, modulates the activity of the DnaK chaperone system. Does not inhibit the co-chaperone activity of DnaJ. The protein is Chaperone modulatory protein CbpM of Escherichia coli (strain K12 / MC4100 / BW2952).